A 102-amino-acid chain; its full sequence is Small ribosomal subunit protein uS10 (102 aa).

It belongs to the universal ribosomal protein uS10 family. Part of the 30S ribosomal subunit.

In terms of biological role, involved in the binding of tRNA to the ribosomes. This is Small ribosomal subunit protein uS10 from Thermotoga neapolitana (strain ATCC 49049 / DSM 4359 / NBRC 107923 / NS-E).